Here is a 108-residue protein sequence, read N- to C-terminus: Tetrahydromethanopterin S-methyltransferase subunit B (108 aa).

The chain crosses the membrane as a helical span at residues 80-100 (AFYGIVVGLAFSGLLALIIFI).

Belongs to the MtrB family. As to quaternary structure, the complex is composed of 8 subunits; MtrA, MtrB, MtrC, MtrD, MtrE, MtrF, MtrG and MtrH.

It is found in the cell membrane. It carries out the reaction 5-methyl-5,6,7,8-tetrahydromethanopterin + coenzyme M + 2 Na(+)(in) = 5,6,7,8-tetrahydromethanopterin + methyl-coenzyme M + 2 Na(+)(out). It functions in the pathway one-carbon metabolism; methanogenesis from CO(2); methyl-coenzyme M from 5,10-methylene-5,6,7,8-tetrahydromethanopterin: step 2/2. Functionally, part of a complex that catalyzes the formation of methyl-coenzyme M and tetrahydromethanopterin from coenzyme M and methyl-tetrahydromethanopterin. This is an energy-conserving, sodium-ion translocating step. The polypeptide is Tetrahydromethanopterin S-methyltransferase subunit B (Methanosarcina acetivorans (strain ATCC 35395 / DSM 2834 / JCM 12185 / C2A)).